Consider the following 305-residue polypeptide: Nuclear egress protein 1 (305 aa).

A compositionally biased stretch (basic and acidic residues) spans 1–11; the sequence is MDRERPRKTRE. The disordered stretch occupies residues 1-24; it reads MDRERPRKTREPASPGSVLSKRSK. The CCCH-type zinc-finger motif lies at 104–230; it reads CLVLSPLGHA…FALFKTDDLH (127 aa).

It belongs to the herpesviridae NEC1 protein family. In terms of assembly, forms a heterohexameric complex with NEC2. Interacts with capsid vertex specific component 2/CVC2; this interaction directs the capsid to the host inner nuclear membrane to initiate budding. Phosphorylated at serine residues in the N-terminus. This phosphorylation regulates the localization within the inner nuclear membrane.

The protein resides in the host nucleus inner membrane. Plays an essential role in virion nuclear egress, the first step of virion release from infected cell. Within the host nucleus, NEC1 interacts with the newly formed capsid through the vertexes and directs it to the inner nuclear membrane by associating with NEC2. Induces the budding of the capsid at the inner nuclear membrane as well as its envelopment into the perinuclear space. There, the NEC1/NEC2 complex promotes the fusion of the enveloped capsid with the outer nuclear membrane and the subsequent release of the viral capsid into the cytoplasm where it will reach the secondary budding sites in the host Golgi or trans-Golgi network. This Equus caballus (Horse) protein is Nuclear egress protein 1.